A 620-amino-acid polypeptide reads, in one-letter code: Palmitoyltransferase ZDHHC17 (620 aa).

Residues 1-292 are Cytoplasmic-facing; it reads MADALVGYEK…LKMDKEFRQK (292 aa). ANK repeat units lie at residues 77-106, 111-140, 144-173, 177-207, 212-241, and 245-274; these read ENVT…IVDQ, LNST…DPSL, EGCS…DVDM, NGMT…SVNL, HKNT…NVDA, and KGET…AKGY. The next 2 membrane-spanning stretches (helical) occupy residues 293–313 and 314–334; these read VMLG…DLDI and DSWL…QFLS. Residues 335-345 lie on the Cytoplasmic side of the membrane; that stretch reads KSFFDHSMHSA. A helical transmembrane segment spans residues 346-366; it reads LPLGIYLATKFWMYITWFYWF. Topologically, residues 367–369 are lumenal; the sequence is WND. A helical membrane pass occupies residues 370–390; that stretch reads LPFVTIHLPFLLNSLALFYNF. Residues 391 to 469 are Cytoplasmic-facing; sequence GKSWKSDPGI…NCVGSGNHRY (79 aa). In terms of domain architecture, DHHC spans 425 to 475; the sequence is IFCSTCLIRKPIRSKHCAVCNRCIAKFDHHCPWVGNCVGSGNHRYFMGYLF. Catalysis depends on cysteine 455, which acts as the S-palmitoyl cysteine intermediate. The chain crosses the membrane as a helical span at residues 470–490; sequence FMGYLFFLLCMICWMMYGCIC. The Lumenal segment spans residues 491–504; sequence YWRIHCATSYTKDG. Residues 505–524 traverse the membrane as a helical segment; sequence FWIYITQIATCSPWMFWMFL. The Cytoplasmic portion of the chain corresponds to 525-620; that stretch reads NSVFHFMWVA…QTSGSGYQLV (96 aa).

This sequence belongs to the DHHC palmitoyltransferase family. AKR/ZDHHC17 subfamily. Autopalmitoylated.

It is found in the golgi apparatus membrane. The protein resides in the cytoplasmic vesicle membrane. Its subcellular location is the presynaptic cell membrane. It catalyses the reaction L-cysteinyl-[protein] + hexadecanoyl-CoA = S-hexadecanoyl-L-cysteinyl-[protein] + CoA. The enzyme catalyses L-cysteinyl-[protein] + tetradecanoyl-CoA = S-tetradecanoyl-L-cysteinyl-[protein] + CoA. It carries out the reaction L-cysteinyl-[protein] + octadecanoyl-CoA = S-octadecanoyl-L-cysteinyl-[protein] + CoA. In terms of biological role, palmitoyltransferase that catalyzes the addition of palmitate onto various protein substrates and is involved in a variety of cellular processes. Has no stringent fatty acid selectivity and in addition to palmitate can also transfer onto target proteins myristate from tetradecanoyl-CoA and stearate from octadecanoyl-CoA. Plays a role in axonogenesis. In Danio rerio (Zebrafish), this protein is Palmitoyltransferase ZDHHC17.